We begin with the raw amino-acid sequence, 314 residues long: Dihydroorotate dehydrogenase (fumarate) (314 aa).

Residues K46, N70–L74, and N130 each bind substrate. A Glycyl lysine isopeptide (Lys-Gly) (interchain with G-Cter in ubiquitin) cross-link involves residue K46. K46–S47 serves as a coordination point for FMN. Residue N130 coordinates FMN. Residue C133 is the Nucleophile of the active site. The FMN site is built by K167 and I195. N196 to S197 contacts substrate. Residues G224, G252–G253, and G274–T275 each bind FMN.

The protein belongs to the dihydroorotate dehydrogenase family. Type 1 subfamily. As to quaternary structure, homodimer. Requires FMN as cofactor.

It localises to the cytoplasm. It carries out the reaction (S)-dihydroorotate + fumarate = orotate + succinate. It functions in the pathway pyrimidine metabolism; UMP biosynthesis via de novo pathway. The activity is independent of the presence of oxygen. Functionally, catalyzes the conversion of dihydroorotate to orotate with fumarate as the electron acceptor. Molecular oxygen can replace fumarate in vitro. Does not use oxaloacetate or NAD or NADP as electron acceptors. In Saccharomyces cerevisiae (strain ATCC 204508 / S288c) (Baker's yeast), this protein is Dihydroorotate dehydrogenase (fumarate) (URA1).